A 269-amino-acid chain; its full sequence is Tryptophan synthase alpha chain (269 aa).

Residues Glu-49 and Asp-60 each act as proton acceptor in the active site.

The protein belongs to the TrpA family. In terms of assembly, tetramer of two alpha and two beta chains.

The catalysed reaction is (1S,2R)-1-C-(indol-3-yl)glycerol 3-phosphate + L-serine = D-glyceraldehyde 3-phosphate + L-tryptophan + H2O. It functions in the pathway amino-acid biosynthesis; L-tryptophan biosynthesis; L-tryptophan from chorismate: step 5/5. Its function is as follows. The alpha subunit is responsible for the aldol cleavage of indoleglycerol phosphate to indole and glyceraldehyde 3-phosphate. The chain is Tryptophan synthase alpha chain from Azotobacter vinelandii (strain DJ / ATCC BAA-1303).